We begin with the raw amino-acid sequence, 388 residues long: P2X purinoceptor 4 (388 aa).

Residues 1 to 33 (MAGCCSVLGSFLFEYDTPRIVLIRSRKVGLMNR) are Cytoplasmic-facing. A helical transmembrane segment spans residues 34–54 (AVQLLILAYVIGWVFVWEKGY). Residues 55 to 338 (QETDSVVSSV…KFDIIPTMIN (284 aa)) lie on the Extracellular side of the membrane. Lys67 and Lys69 together coordinate ATP. Residues Lys67 and Lys69 each contribute to the CTP site. 2 N-linked (GlcNAc...) asparagine glycosylation sites follow: Asn75 and Asn110. Disulfide bonds link Cys116–Cys165, Cys126–Cys149, and Cys132–Cys159. Asn153 and Asn184 each carry an N-linked (GlcNAc...) asparagine glycan. ATP-binding residues include Thr186 and Leu188. Thr186 is a binding site for CTP. N-linked (GlcNAc...) asparagine glycans are attached at residues Asn199 and Asn208. 2 disulfide bridges follow: Cys217–Cys227 and Cys261–Cys270. Asn293, Arg295, and Lys313 together coordinate ATP. CTP-binding residues include Asn293, Arg295, and Lys313. A helical membrane pass occupies residues 339 to 359 (VGSGLALLGVATVLCDVIVLY). The Cytoplasmic segment spans residues 360 to 388 (CMKKKYYYRDKKYKYVEDYEQGLSGEMNQ).

Belongs to the P2X receptor family. As to quaternary structure, functional P2RXs are organized as homomeric and heteromeric trimers. Forms heterotrimer with P2RX1. Interacts with P2RX7 (via C-terminus); this interaction is functional only in the presence of ATP. Forms heterotrimer with P2RX4; functional differences between homomeric P2RX4 and P2RX4/6 heterotrimer are minor. Interacts with AP1M2. Widespread distribution in the brain. Strongly expressed in microglial cells. Also expressed in epithelial cells.

It is found in the cell membrane. It localises to the lysosome membrane. It carries out the reaction K(+)(in) = K(+)(out). The enzyme catalyses Na(+)(in) = Na(+)(out). It catalyses the reaction Ca(2+)(in) = Ca(2+)(out). Its activity is regulated as follows. Activated by ATP. pH-dependent and inhibited by acidic pH. Functionally, ATP-gated nonselective transmembrane cation channel permeable to potassium, sodium and calcium. CTP, but not GTP or UTP, functions as a weak affinity agonist for P2RX4. Activated by extracellularly released ATP, it plays multiple role in immunity and central nervous system physiology. Plays a key role in initial steps of T-cell activation and Ca(2+) microdomain formation. Also participates in basal T-cell activity without TCR/CD3 stimulation. Promotes the differentiation and activation of Th17 cells via expression of retinoic acid-related orphan receptor C/RORC. Upon activation, drives microglia motility via the PI3K/Akt pathway. Could also function as an ATP-gated cation channel of lysosomal membranes. This Rattus norvegicus (Rat) protein is P2X purinoceptor 4 (P2rx4).